The following is a 487-amino-acid chain: Proline--tRNA ligase (487 aa).

This sequence belongs to the class-II aminoacyl-tRNA synthetase family. ProS type 3 subfamily. Homodimer.

It is found in the cytoplasm. It carries out the reaction tRNA(Pro) + L-proline + ATP = L-prolyl-tRNA(Pro) + AMP + diphosphate. In terms of biological role, catalyzes the attachment of proline to tRNA(Pro) in a two-step reaction: proline is first activated by ATP to form Pro-AMP and then transferred to the acceptor end of tRNA(Pro). The chain is Proline--tRNA ligase from Pyrobaculum calidifontis (strain DSM 21063 / JCM 11548 / VA1).